The following is a 676-amino-acid chain: Envelope glycoprotein (676 aa).

Positions 1–34 (MACSTLSKSPKDKIDPRDLLIPLILFLSLKGARS) are cleaved as a signal peptide. Residues 35–270 (AAPGSSPHQV…KYQNLGPRVP (236 aa)) form a receptor-binding domain (RBD) region. Topologically, residues 35–620 (AAPGSSPHQV…FNRSPWFTTL (586 aa)) are extracellular. N-linked (GlcNAc...) asparagine; by host glycosylation occurs at N46. 5 cysteine pairs are disulfide-bonded: C80-C132, C106-C121, C107-C117, C155-C175, and C167-C180. H89 provides a ligand contact to Zn(2+). Residue D120 participates in Zn(2+) binding. A glycan (N-linked (GlcNAc...) asparagine; by host) is linked at N202. A disulfide bond links C212 and C218. The tract at residues 287-322 (NPLPKPAKSPSASNSTPTLISPSPAPTQPPPAGTGD) is disordered. The segment covering 294–308 (KSPSASNSTPTLISP) has biased composition (low complexity). The segment covering 309–318 (SPAPTQPPPA) has biased composition (pro residues). N336 carries N-linked (GlcNAc...) asparagine; by host glycosylation. 6 cysteine pairs are disulfide-bonded: C346–C349, C346–C573, C376–C430, C395–C407, C437–C450, and C565–C572. Positions 346-349 (CWLC) match the CXXC motif. N-linked (GlcNAc...) asparagine; by host glycans are attached at residues N368 and N375. N-linked (GlcNAc...) asparagine; by host glycosylation is found at N408 and N444. The tract at residues 482–502 (VSLTLALLLGGLTMGGIAAGV) is fusion peptide. Positions 513 to 547 (QQFQQLHAAVQDDLKEVEKSITNLEKSLTSLSEVV) form a coiled coil. An immunosuppression region spans residues 548 to 564 (LQNRRGLDLLFLKEGGL). Positions 565 to 573 (CAALKEECC) match the CX6CC motif. The chain crosses the membrane as a helical span at residues 621–641 (ISTIMGPLIILLLILLFGPCI). C640 is lipidated: S-palmitoyl cysteine; by host. Residues 642–676 (LNRLVQFVKDRISVVQALVLTQQYHQLKPLEYEPQ) are Cytoplasmic-facing. The short motif at 665–668 (YHQL) is the YXXL motif; contains endocytosis signal element.

As to quaternary structure, the mature envelope protein (Env) consists of a trimer of SU-TM heterodimers attached by a labile interchain disulfide bond. Post-translationally, specific enzymatic cleavages in vivo yield mature proteins. Envelope glycoproteins are synthesized as an inactive precursor that is N-glycosylated and processed likely by host cell furin or by a furin-like protease in the Golgi to yield the mature SU and TM proteins. The cleavage site between SU and TM requires the minimal sequence [KR]-X-[KR]-R. The R-peptide is released from the C-terminus of the cytoplasmic tail of the TM protein upon particle formation as a result of proteolytic cleavage by the viral protease. Cleavage of this peptide is required for TM to become fusogenic. The CXXC motif is highly conserved across a broad range of retroviral envelope proteins. It is thought to participate in the formation of a labile disulfide bond possibly with the CX6CC motif present in the transmembrane protein. Isomerization of the intersubunit disulfide bond to an SU intrachain disulfide bond is thought to occur upon receptor recognition in order to allow membrane fusion. In terms of processing, the transmembrane protein is palmitoylated. Post-translationally, the R-peptide is palmitoylated.

The protein localises to the virion membrane. It is found in the host cell membrane. Functionally, the surface protein (SU) attaches the virus to the host cell by binding to its receptor. This interaction triggers the refolding of the transmembrane protein (TM) and is thought to activate its fusogenic potential by unmasking its fusion peptide. Fusion occurs at the host cell plasma membrane. The transmembrane protein (TM) acts as a class I viral fusion protein. Under the current model, the protein has at least 3 conformational states: pre-fusion native state, pre-hairpin intermediate state, and post-fusion hairpin state. During viral and target cell membrane fusion, the coiled coil regions (heptad repeats) assume a trimer-of-hairpins structure, positioning the fusion peptide in close proximity to the C-terminal region of the ectodomain. The formation of this structure appears to drive apposition and subsequent fusion of viral and target cell membranes. Membranes fusion leads to delivery of the nucleocapsid into the cytoplasm. This is Envelope glycoprotein (env) from Mus musculus (Mouse).